Here is a 95-residue protein sequence, read N- to C-terminus: uncharacterized protein (95 aa).

This is an uncharacterized protein from Acidianus hospitalis (AFV-1).